Reading from the N-terminus, the 129-residue chain is Small ribosomal subunit protein uS11 (129 aa).

This sequence belongs to the universal ribosomal protein uS11 family. In terms of assembly, part of the 30S ribosomal subunit. Interacts with proteins S7 and S18. Binds to IF-3.

Located on the platform of the 30S subunit, it bridges several disparate RNA helices of the 16S rRNA. Forms part of the Shine-Dalgarno cleft in the 70S ribosome. The chain is Small ribosomal subunit protein uS11 from Bacillus cytotoxicus (strain DSM 22905 / CIP 110041 / 391-98 / NVH 391-98).